A 106-amino-acid polypeptide reads, in one-letter code: Colipase A (106 aa).

Positions 1–11 (LLLVALAVAYA) are cleaved as a signal peptide. Positions 12–16 (VPDPR) are cleaved as a propeptide — enterostatin, activation peptide. 5 cysteine pairs are disulfide-bonded: Cys-28–Cys-39, Cys-34–Cys-50, Cys-38–Cys-72, Cys-60–Cys-80, and Cys-74–Cys-98. Trp-63 serves as a coordination point for taurodeoxycholate.

This sequence belongs to the colipase family. In terms of assembly, forms a 1:1 stoichiometric complex with pancreatic lipase. In terms of tissue distribution, expressed by the pancreas.

It is found in the secreted. Functionally, colipase is a cofactor of pancreatic lipase. It allows the lipase to anchor itself to the lipid-water interface. Without colipase the enzyme is washed off by bile salts, which have an inhibitory effect on the lipase. Enterostatin has a biological activity as a satiety signal. This chain is Colipase A (CLPS1), found in Equus caballus (Horse).